Here is a 751-residue protein sequence, read N- to C-terminus: Leucine-rich repeat-containing protein 56 homolog (751 aa).

Residues M1–L149 form a disordered region. Positions G13 to P22 are enriched in pro residues. Polar residues-rich tracts occupy residues R28–R39 and H60–S87. LRR repeat units follow at residues M210–N235, L236–A256, V258–S279, S280–Q304, and K307–S328. Disordered regions lie at residues S430 to Q538, T645 to W698, and E717 to F751. Composition is skewed to polar residues over residues K456–G471 and Q662–A671. The segment covering E717–V738 has biased composition (basic and acidic residues). Over residues E739–F751 the composition is skewed to acidic residues.

The protein belongs to the LRRC56 family.

Its subcellular location is the cell projection. It localises to the cilium. The protein localises to the flagellum. Functionally, required for the assembly of dynein arms in the distal portion of flagellum axoneme. The sequence is that of Leucine-rich repeat-containing protein 56 homolog from Trypanosoma brucei brucei (strain 927/4 GUTat10.1).